The sequence spans 104 residues: Inclusion membrane protein F (104 aa).

A run of 2 helical transmembrane segments spans residues 39–59 (LVVALAALVLNGALCVLSLVA) and 70–90 (LAVLVATTLASFLCVAYVLFI).

Its subcellular location is the secreted. It is found in the host vacuole. The protein localises to the host pathogen-containing vacuole. The protein resides in the host pathogen-containing vacuole membrane. Its function is as follows. Inclusion membrane protein probably involved in early modification events of the chlamydial inclusion. This is Inclusion membrane protein F from Chlamydia trachomatis serovar L2 (strain ATCC VR-902B / DSM 19102 / 434/Bu).